Reading from the N-terminus, the 227-residue chain is Phosphoribosylformylglycinamidine synthase subunit PurQ (227 aa).

The region spanning 3–225 is the Glutamine amidotransferase type-1 domain; it reads FAVIVFPGSN…LKQWRETYVV (223 aa). The active-site Nucleophile is the cysteine 86. Active-site residues include histidine 194 and glutamate 196.

Part of the FGAM synthase complex composed of 1 PurL, 1 PurQ and 2 PurS subunits.

The protein resides in the cytoplasm. The enzyme catalyses N(2)-formyl-N(1)-(5-phospho-beta-D-ribosyl)glycinamide + L-glutamine + ATP + H2O = 2-formamido-N(1)-(5-O-phospho-beta-D-ribosyl)acetamidine + L-glutamate + ADP + phosphate + H(+). It carries out the reaction L-glutamine + H2O = L-glutamate + NH4(+). The protein operates within purine metabolism; IMP biosynthesis via de novo pathway; 5-amino-1-(5-phospho-D-ribosyl)imidazole from N(2)-formyl-N(1)-(5-phospho-D-ribosyl)glycinamide: step 1/2. In terms of biological role, part of the phosphoribosylformylglycinamidine synthase complex involved in the purines biosynthetic pathway. Catalyzes the ATP-dependent conversion of formylglycinamide ribonucleotide (FGAR) and glutamine to yield formylglycinamidine ribonucleotide (FGAM) and glutamate. The FGAM synthase complex is composed of three subunits. PurQ produces an ammonia molecule by converting glutamine to glutamate. PurL transfers the ammonia molecule to FGAR to form FGAM in an ATP-dependent manner. PurS interacts with PurQ and PurL and is thought to assist in the transfer of the ammonia molecule from PurQ to PurL. The chain is Phosphoribosylformylglycinamidine synthase subunit PurQ from Bacillus thuringiensis (strain Al Hakam).